The chain runs to 321 residues: Ribosomal RNA small subunit methyltransferase H (321 aa).

S-adenosyl-L-methionine is bound by residues 34-36, D54, F80, D102, and Q109; that span reads GGH.

Belongs to the methyltransferase superfamily. RsmH family.

The protein localises to the cytoplasm. The catalysed reaction is cytidine(1402) in 16S rRNA + S-adenosyl-L-methionine = N(4)-methylcytidine(1402) in 16S rRNA + S-adenosyl-L-homocysteine + H(+). In terms of biological role, specifically methylates the N4 position of cytidine in position 1402 (C1402) of 16S rRNA. The protein is Ribosomal RNA small subunit methyltransferase H of Blochmanniella floridana.